A 215-amino-acid polypeptide reads, in one-letter code: HTH-type transcriptional repressor FabR (215 aa).

The HTH tetR-type domain occupies 10-70 (KTRRSLVEAA…TMVDESGLML (61 aa)). Residues 33 to 52 (SLREVAREAGIAPTSFYRHF) constitute a DNA-binding region (H-T-H motif).

Homodimer.

It is found in the cytoplasm. Represses the transcription of fabB, involved in unsaturated fatty acid (UFA) biosynthesis. By controlling UFA production, FabR directly influences the physical properties of the membrane bilayer. The protein is HTH-type transcriptional repressor FabR of Escherichia coli O1:K1 / APEC.